The following is a 438-amino-acid chain: Methylenetetrahydrofolate--tRNA-(uracil-5-)-methyltransferase TrmFO (438 aa).

9 to 14 is an FAD binding site; that stretch reads GAGLAG.

Belongs to the MnmG family. TrmFO subfamily. FAD is required as a cofactor.

The protein localises to the cytoplasm. It carries out the reaction uridine(54) in tRNA + (6R)-5,10-methylene-5,6,7,8-tetrahydrofolate + NADH + H(+) = 5-methyluridine(54) in tRNA + (6S)-5,6,7,8-tetrahydrofolate + NAD(+). It catalyses the reaction uridine(54) in tRNA + (6R)-5,10-methylene-5,6,7,8-tetrahydrofolate + NADPH + H(+) = 5-methyluridine(54) in tRNA + (6S)-5,6,7,8-tetrahydrofolate + NADP(+). Catalyzes the folate-dependent formation of 5-methyl-uridine at position 54 (M-5-U54) in all tRNAs. This chain is Methylenetetrahydrofolate--tRNA-(uracil-5-)-methyltransferase TrmFO, found in Lactobacillus acidophilus (strain ATCC 700396 / NCK56 / N2 / NCFM).